We begin with the raw amino-acid sequence, 172 residues long: Myosin regulatory light chain 2, smooth muscle minor isoform (172 aa).

At Ser2 the chain carries N-acetylserine. Thr19 is subject to Phosphothreonine; by MLCK. Ser20 bears the Phosphoserine; by MLCK mark. EF-hand domains follow at residues 29–64, 98–133, and 134–169; these read SQIQEFKEAFNMIDQNRDGFIDKEDLHDMLASLGKN, DPEDVIRNAFACFDEEATGFIQEDYLRELLTTMGDR, and FTDEEVDELYREAPIDKKGNFNYIEFTRILKHGAKD. Positions 42, 44, 46, and 53 each coordinate Ca(2+).

As to quaternary structure, myosin is a hexamer of 2 heavy chains and 4 light chains. Phosphorylation increases the actin-activated myosin ATPase activity and thereby regulates the contractile activity.

In terms of biological role, myosin regulatory subunit that plays an important role in regulation of both smooth muscle and nonmuscle cell contractile activity. Implicated in cytokinesis, receptor capping, and cell locomotion. The sequence is that of Myosin regulatory light chain 2, smooth muscle minor isoform from Gallus gallus (Chicken).